A 394-amino-acid chain; its full sequence is QWRF motif-containing protein 7 (394 aa).

The tract at residues 1 to 171 (MATTGRRLRP…ESPVSKAKIR (171 aa)) is disordered. Over residues 14 to 67 (NNNRSRTISSSISLPVSLNASLSSSTSSSSSSSPSNSSKRVMITRSQSTTRSSR) the composition is skewed to low complexity. Over residues 85-96 (NSASRSQEINNG) the composition is skewed to polar residues. The segment covering 97–110 (RSRESFARYLEQRT) has biased composition (basic and acidic residues). Polar residues-rich tracts occupy residues 111–120 (RGSPRSNASS) and 142–157 (TMKTPLSSSAPTTSMC). Positions 211 to 214 (QWRF) match the QWRF motif motif.

This sequence belongs to the QWRF family.

The protein is QWRF motif-containing protein 7 (QWRF7) of Arabidopsis thaliana (Mouse-ear cress).